The chain runs to 162 residues: UPF0260 protein Atu0932 (162 aa).

The protein belongs to the UPF0260 family.

In Agrobacterium fabrum (strain C58 / ATCC 33970) (Agrobacterium tumefaciens (strain C58)), this protein is UPF0260 protein Atu0932.